A 438-amino-acid polypeptide reads, in one-letter code: Histidinol dehydrogenase (438 aa).

NAD(+) contacts are provided by tyrosine 135, glutamine 193, and asparagine 216. Substrate is bound by residues serine 243, glutamine 265, and histidine 268. 2 residues coordinate Zn(2+): glutamine 265 and histidine 268. Active-site proton acceptor residues include glutamate 332 and histidine 333. Residues histidine 333, aspartate 366, glutamate 420, and histidine 425 each contribute to the substrate site. Aspartate 366 contacts Zn(2+). Zn(2+) is bound at residue histidine 425.

It belongs to the histidinol dehydrogenase family. The cofactor is Zn(2+).

It catalyses the reaction L-histidinol + 2 NAD(+) + H2O = L-histidine + 2 NADH + 3 H(+). Its pathway is amino-acid biosynthesis; L-histidine biosynthesis; L-histidine from 5-phospho-alpha-D-ribose 1-diphosphate: step 9/9. In terms of biological role, catalyzes the sequential NAD-dependent oxidations of L-histidinol to L-histidinaldehyde and then to L-histidine. This chain is Histidinol dehydrogenase, found in Shewanella oneidensis (strain ATCC 700550 / JCM 31522 / CIP 106686 / LMG 19005 / NCIMB 14063 / MR-1).